The following is a 174-amino-acid chain: NADH-quinone oxidoreductase subunit I (174 aa).

4Fe-4S ferredoxin-type domains are found at residues 61–91 (LTVK…ITAA) and 103–132 (ISYE…LGPE). [4Fe-4S] cluster-binding residues include Cys-71, Cys-74, Cys-77, Cys-81, Cys-112, Cys-115, Cys-118, and Cys-122.

Belongs to the complex I 23 kDa subunit family. As to quaternary structure, NDH-1 is composed of 14 different subunits. Subunits NuoA, H, J, K, L, M, N constitute the membrane sector of the complex. It depends on [4Fe-4S] cluster as a cofactor.

Its subcellular location is the cell inner membrane. It carries out the reaction a quinone + NADH + 5 H(+)(in) = a quinol + NAD(+) + 4 H(+)(out). Functionally, NDH-1 shuttles electrons from NADH, via FMN and iron-sulfur (Fe-S) centers, to quinones in the respiratory chain. The immediate electron acceptor for the enzyme in this species is believed to be ubiquinone. Couples the redox reaction to proton translocation (for every two electrons transferred, four hydrogen ions are translocated across the cytoplasmic membrane), and thus conserves the redox energy in a proton gradient. This is NADH-quinone oxidoreductase subunit I from Bdellovibrio bacteriovorus (strain ATCC 15356 / DSM 50701 / NCIMB 9529 / HD100).